A 115-amino-acid polypeptide reads, in one-letter code: Large ribosomal subunit protein bL19 (115 aa).

It belongs to the bacterial ribosomal protein bL19 family.

Functionally, this protein is located at the 30S-50S ribosomal subunit interface and may play a role in the structure and function of the aminoacyl-tRNA binding site. The chain is Large ribosomal subunit protein bL19 from Streptococcus pneumoniae (strain JJA).